The following is a 598-amino-acid chain: Elongation factor 4 (598 aa).

Residues 2–184 (KNIRNFSIIA…EIVAKIPAPE (183 aa)) form the tr-type G domain. GTP is bound by residues 14–19 (DHGKST) and 131–134 (NKID).

It belongs to the TRAFAC class translation factor GTPase superfamily. Classic translation factor GTPase family. LepA subfamily.

Its subcellular location is the cell inner membrane. The catalysed reaction is GTP + H2O = GDP + phosphate + H(+). Its function is as follows. Required for accurate and efficient protein synthesis under certain stress conditions. May act as a fidelity factor of the translation reaction, by catalyzing a one-codon backward translocation of tRNAs on improperly translocated ribosomes. Back-translocation proceeds from a post-translocation (POST) complex to a pre-translocation (PRE) complex, thus giving elongation factor G a second chance to translocate the tRNAs correctly. Binds to ribosomes in a GTP-dependent manner. In Haemophilus influenzae (strain ATCC 51907 / DSM 11121 / KW20 / Rd), this protein is Elongation factor 4.